We begin with the raw amino-acid sequence, 165 residues long: Large ribosomal subunit protein uL10 (165 aa).

It belongs to the universal ribosomal protein uL10 family. As to quaternary structure, part of the ribosomal stalk of the 50S ribosomal subunit. The N-terminus interacts with L11 and the large rRNA to form the base of the stalk. The C-terminus forms an elongated spine to which L12 dimers bind in a sequential fashion forming a multimeric L10(L12)X complex.

Its function is as follows. Forms part of the ribosomal stalk, playing a central role in the interaction of the ribosome with GTP-bound translation factors. This is Large ribosomal subunit protein uL10 from Edwardsiella ictaluri (strain 93-146).